A 163-amino-acid polypeptide reads, in one-letter code: Nucleotide-binding protein Mflv_5248 (163 aa).

Belongs to the YajQ family.

Its function is as follows. Nucleotide-binding protein. The sequence is that of Nucleotide-binding protein Mflv_5248 from Mycolicibacterium gilvum (strain PYR-GCK) (Mycobacterium gilvum (strain PYR-GCK)).